The primary structure comprises 188 residues: Elongation factor P (188 aa).

This sequence belongs to the elongation factor P family.

The protein resides in the cytoplasm. The protein operates within protein biosynthesis; polypeptide chain elongation. Involved in peptide bond synthesis. Stimulates efficient translation and peptide-bond synthesis on native or reconstituted 70S ribosomes in vitro. Probably functions indirectly by altering the affinity of the ribosome for aminoacyl-tRNA, thus increasing their reactivity as acceptors for peptidyl transferase. The chain is Elongation factor P from Rhodopseudomonas palustris (strain ATCC BAA-98 / CGA009).